A 243-amino-acid polypeptide reads, in one-letter code: Probable transcriptional regulatory protein BG0025 (243 aa).

This sequence belongs to the TACO1 family.

It localises to the cytoplasm. This chain is Probable transcriptional regulatory protein BG0025, found in Borrelia garinii subsp. bavariensis (strain ATCC BAA-2496 / DSM 23469 / PBi) (Borreliella bavariensis).